The sequence spans 467 residues: Na(+)-translocating NADH-quinone reductase subunit A (467 aa).

The protein belongs to the NqrA family. In terms of assembly, composed of six subunits; NqrA, NqrB, NqrC, NqrD, NqrE and NqrF.

It carries out the reaction a ubiquinone + n Na(+)(in) + NADH + H(+) = a ubiquinol + n Na(+)(out) + NAD(+). Its function is as follows. NQR complex catalyzes the reduction of ubiquinone-1 to ubiquinol by two successive reactions, coupled with the transport of Na(+) ions from the cytoplasm to the periplasm. NqrA to NqrE are probably involved in the second step, the conversion of ubisemiquinone to ubiquinol. This chain is Na(+)-translocating NADH-quinone reductase subunit A, found in Chlamydia pneumoniae (Chlamydophila pneumoniae).